The primary structure comprises 1111 residues: Protein NETWORKED 1C (1111 aa).

The NAB domain occupies 13-93 (YSWWWDSHNT…ERYNHATGVI (81 aa)). Coiled coils occupy residues 202–287 (SESE…KESS), 314–605 (ERAS…LISE), and 642–752 (KTIG…LESK). The interval 850-870 (TGGGRSMRKQDGGSGRMRKQS) is disordered. Positions 943-1009 (NREVNKRRVL…EGEEAIEKLF (67 aa)) form a coiled coil.

It belongs to the NET family.

Plant-specific actin binding protein. May be part of a membrane-cytoskeletal adapter complex. This Arabidopsis thaliana (Mouse-ear cress) protein is Protein NETWORKED 1C.